Reading from the N-terminus, the 330-residue chain is Mas-related G-protein coupled receptor member X2 (330 aa).

Topologically, residues 1-33 are extracellular; it reads MDPTTPAWGNESTTMNGNDQALPLLCGKETLIP. The helical transmembrane segment at 34 to 54 threads the bilayer; sequence VFLILFIALVGLVGNGFVLWL. The Cytoplasmic segment spans residues 55-63; it reads LGFCMRRNA. Residues 64-84 traverse the membrane as a helical segment; sequence FSVYVLSLAGADFLFLCFQLI. The Extracellular portion of the chain corresponds to 85-96; it reads NCLVYLSNFFCS. Residues 97 to 117 traverse the membrane as a helical segment; the sequence is ISIDFPSFFTTVMTCAYLAGL. Residues 118-144 are Cytoplasmic-facing; sequence SMLSTISTERCLSVLWPIWYRCRRPRH. A helical membrane pass occupies residues 145–165; it reads LSAVVCVLLWALSLLLSILEG. The Extracellular portion of the chain corresponds to 166 to 184; sequence KFCGFFFSDGDSGWCQTFD. The helical transmembrane segment at 185-205 threads the bilayer; the sequence is FITAAWLIFLFMVLCGSSLAL. At 206 to 228 the chain is on the cytoplasmic side; the sequence is LVRILCGSRGLPLTRLYLTILLT. Residues 229–249 traverse the membrane as a helical segment; the sequence is VLVFLLCGLPFGIQWFLILWI. The Extracellular segment spans residues 250–264; sequence WENSDVLFCHIHPVS. A helical membrane pass occupies residues 265 to 285; the sequence is VVLSSLNSSANPIIYFFVGTF. Topologically, residues 286 to 330 are cytoplasmic; it reads RKQWRLQQPILKLALQRALQDTAEVDHSEGCFRQGTPEMSRSSLV.

This sequence belongs to the G-protein coupled receptor 1 family. Mas subfamily.

The protein localises to the cell membrane. Functionally, mast cell-specific receptor for basic secretagogues, i.e. cationic amphiphilic drugs, as well as endo- or exogenous peptides, consisting of a basic head group and a hydrophobic core. Recognizes and binds small molecules containing a cyclized tetrahydroisoquinoline (THIQ), such as non-steroidal neuromuscular blocking drugs (NMBDs), including tubocurarine and atracurium. In response to these compounds, mediates pseudo-allergic reactions characterized by histamine release, inflammation and airway contraction. This chain is Mas-related G-protein coupled receptor member X2 (MRGPRX2), found in Pongo pygmaeus (Bornean orangutan).